The chain runs to 145 residues: Cuticle protein 65 (145 aa).

Tandem repeats lie at residues 27-30 (AAPA), 33-37 (AAPAV), 39-42 (AAPA), 86-89 (AAPV), 92-95 (AAPA), 98-101 (AAPA), and 123-126 (AAPA).

Component of the cuticle of migratory locust which contains more than 100 different structural proteins. This is Cuticle protein 65 from Locusta migratoria (Migratory locust).